A 209-amino-acid chain; its full sequence is MMENYITSFQLRFCPAAYLHLEQLPSLWRSILPYLPQWRDSAHLNAALLDEFSLDTDYEEPHGLGALPLQPQSQLELLLCRLGLVLHGEAIRRCVLASPLQQLLTLVNQETLRQIIVQHELLIGPWPTHWQRPLPTEIESRTMIQSGLAFWLAAMEPQPQAWCKRLSLRLPLATPSEPWLVAESQRPLAQTLCHKLVKQVTPTCSHLFK.

Its function is as follows. Belongs to an operon involved in the translocation of Yop proteins across the bacterial membranes or in the specific control of this function. The sequence is that of Yop proteins translocation protein K (yscK) from Yersinia pseudotuberculosis serotype I (strain IP32953).